Consider the following 452-residue polypeptide: Adenylosuccinate synthetase 2 (452 aa).

Residues 19 to 25 and 47 to 49 contribute to the GTP site; these read GDEGKAR and GHT. D20 acts as the Proton acceptor in catalysis. Mg(2+) contacts are provided by D20 and G47. IMP-binding positions include 20–23, 45–48, T131, R145, Q223, T238, and R338; these read DEGK and NAGH. The active-site Proton donor is the H48. 334–340 serves as a coordination point for substrate; sequence TGTGRPR. Residues R340, 366–368, and 437–439 contribute to the GTP site; these read KCD and GLG.

Belongs to the adenylosuccinate synthetase family. As to quaternary structure, homodimer. Mg(2+) is required as a cofactor.

It localises to the cytoplasm. It carries out the reaction IMP + L-aspartate + GTP = N(6)-(1,2-dicarboxyethyl)-AMP + GDP + phosphate + 2 H(+). It participates in purine metabolism; AMP biosynthesis via de novo pathway; AMP from IMP: step 1/2. Plays an important role in the de novo pathway of purine nucleotide biosynthesis. Catalyzes the first committed step in the biosynthesis of AMP from IMP. This Cupriavidus pinatubonensis (strain JMP 134 / LMG 1197) (Cupriavidus necator (strain JMP 134)) protein is Adenylosuccinate synthetase 2.